The primary structure comprises 444 residues: Tol-Pal system protein TolB (444 aa).

The signal sequence occupies residues 1-26 (MTLFRTLAPMGLALALLLPAAVPAAA). A compositionally biased stretch (polar residues) spans 281 to 310 (IYTLDTGSGTRRQLTNSPSIETAPSYSPDG). Residues 281–311 (IYTLDTGSGTRRQLTNSPSIETAPSYSPDGS) are disordered.

This sequence belongs to the TolB family. As to quaternary structure, the Tol-Pal system is composed of five core proteins: the inner membrane proteins TolA, TolQ and TolR, the periplasmic protein TolB and the outer membrane protein Pal. They form a network linking the inner and outer membranes and the peptidoglycan layer.

Its subcellular location is the periplasm. In terms of biological role, part of the Tol-Pal system, which plays a role in outer membrane invagination during cell division and is important for maintaining outer membrane integrity. The protein is Tol-Pal system protein TolB of Cereibacter sphaeroides (strain ATCC 17029 / ATH 2.4.9) (Rhodobacter sphaeroides).